Consider the following 258-residue polypeptide: Tryptophan synthase alpha chain (258 aa).

Active-site proton acceptor residues include E52 and D63.

It belongs to the TrpA family. Tetramer of two alpha and two beta chains.

It catalyses the reaction (1S,2R)-1-C-(indol-3-yl)glycerol 3-phosphate + L-serine = D-glyceraldehyde 3-phosphate + L-tryptophan + H2O. The protein operates within amino-acid biosynthesis; L-tryptophan biosynthesis; L-tryptophan from chorismate: step 5/5. Functionally, the alpha subunit is responsible for the aldol cleavage of indoleglycerol phosphate to indole and glyceraldehyde 3-phosphate. This chain is Tryptophan synthase alpha chain, found in Streptococcus pneumoniae (strain JJA).